A 205-amino-acid polypeptide reads, in one-letter code: Glycerol-3-phosphate acyltransferase 1 (205 aa).

5 consecutive transmembrane segments (helical) span residues 7-27, 52-74, 78-100, 125-145, and 160-180; these read TLIG…KLFL, WGIL…VYFV, HINI…WNHF, LLIA…PLVF, and AGIV…QDII.

The protein belongs to the PlsY family. Probably interacts with PlsX.

The protein resides in the cell membrane. It carries out the reaction an acyl phosphate + sn-glycerol 3-phosphate = a 1-acyl-sn-glycero-3-phosphate + phosphate. It participates in lipid metabolism; phospholipid metabolism. Its function is as follows. Catalyzes the transfer of an acyl group from acyl-phosphate (acyl-PO(4)) to glycerol-3-phosphate (G3P) to form lysophosphatidic acid (LPA). This enzyme utilizes acyl-phosphate as fatty acyl donor, but not acyl-CoA or acyl-ACP. This Lactobacillus acidophilus (strain ATCC 700396 / NCK56 / N2 / NCFM) protein is Glycerol-3-phosphate acyltransferase 1.